The primary structure comprises 195 residues: Dephospho-CoA kinase (195 aa).

Positions 2 to 195 (IISLTGGIGV…DIVDSLNLNT (194 aa)) constitute a DPCK domain. 10-15 (GVGKSF) contributes to the ATP binding site.

This sequence belongs to the CoaE family.

It is found in the cytoplasm. It carries out the reaction 3'-dephospho-CoA + ATP = ADP + CoA + H(+). It participates in cofactor biosynthesis; coenzyme A biosynthesis; CoA from (R)-pantothenate: step 5/5. Functionally, catalyzes the phosphorylation of the 3'-hydroxyl group of dephosphocoenzyme A to form coenzyme A. The chain is Dephospho-CoA kinase from Wolbachia pipientis wMel.